The following is a 696-amino-acid chain: Glycosyltransferase GlyA (696 aa).

The GT2 domain stretch occupies residues 1–301 (MLVDDKITVI…NQLSRQEESE (301 aa)). Residues 302-556 (KKAIVLAANY…TELGQNHHLH (255 aa)) form a GT8 domain region. UDP contacts are provided by residues 308 to 313 (AANYGY) and 399 to 400 (DC). 3 residues coordinate Mn(2+): Asp-399, Asp-401, and His-518. 518–524 (HYLSHRK) is a binding site for UDP.

It in the N-terminal section; belongs to the glycosyltransferase 2 family. In the central section; belongs to the glycosyltransferase 8 family.

It participates in protein modification; protein glycosylation. Involved in the polymorphic O-glycosylation of the serine-rich repeat protein PsrP. Catalyzes the fourth step in glycosylation of PsrP in this bacteria. Can transfer the sugar from UDP-galactose to the terminal sugar moiety of PsrP-GlcNAc-Glc-Gal or of PsrP-GlcNAc-Glc-Glc (using truncated substrates with the PsrP SSR1 domain). Has hydrolytic activity against UDP-galactose and to a lesser extent against UDP-glucose. This chain is Glycosyltransferase GlyA, found in Streptococcus pneumoniae serotype 4 (strain ATCC BAA-334 / TIGR4).